The sequence spans 251 residues: Copper transport protein CTR1 (251 aa).

Residues 90–110 (AFGIFVLLFFVAFLARMLEFV) traverse the membrane as a helical segment. The span at 157–173 (DESIDKQNSPQHEETTK) shows a compositional bias: basic and acidic residues. The interval 157-176 (DESIDKQNSPQHEETTKARG) is disordered. A helical membrane pass occupies residues 208–228 (MLAAMTYTLTYFFAVVIGSGV).

As to quaternary structure, oligomer.

The protein resides in the cell membrane. In terms of biological role, required for high affinity copper (probably reduced Cu I) transport into the cell. The polypeptide is Copper transport protein CTR1 (CTR1) (Candida albicans (strain SC5314 / ATCC MYA-2876) (Yeast)).